Reading from the N-terminus, the 134-residue chain is Cystatin-1 (134 aa).

The signal sequence occupies residues methionine 1–serine 17. The Cystatin domain maps to glycine 21 to tryptophan 116. Residues glutamine 65–glycine 69 carry the Secondary area of contact motif. 2 disulfides stabilise this stretch: cysteine 83–cysteine 96 and cysteine 107–cysteine 127.

This sequence belongs to the cystatin family. In terms of tissue distribution, expressed by the venom gland.

Its subcellular location is the secreted. Its function is as follows. Inhibits various C1 cysteine proteases. This protein has no toxic activity and its function in the venom is unknown. It may play a role as a housekeeping or regulatory protein. The protein is Cystatin-1 of Chilobrachys guangxiensis (Chinese earth tiger tarantula).